Here is an 80-residue protein sequence, read N- to C-terminus: Exodeoxyribonuclease 7 small subunit (80 aa).

It belongs to the XseB family. Heterooligomer composed of large and small subunits.

It is found in the cytoplasm. It catalyses the reaction Exonucleolytic cleavage in either 5'- to 3'- or 3'- to 5'-direction to yield nucleoside 5'-phosphates.. Its function is as follows. Bidirectionally degrades single-stranded DNA into large acid-insoluble oligonucleotides, which are then degraded further into small acid-soluble oligonucleotides. This chain is Exodeoxyribonuclease 7 small subunit, found in Escherichia coli (strain SE11).